Here is a 461-residue protein sequence, read N- to C-terminus: Bifunctional protein GlmU (461 aa).

A pyrophosphorylase region spans residues 1–243 (MNATVPSAAP…EDELRGINSR (243 aa)). UDP-N-acetyl-alpha-D-glucosamine is bound by residues 24–27 (LAAG), K38, Q86, 91–92 (GT), 112–114 (YGD), G155, E169, N184, and N241. Residue D114 coordinates Mg(2+). Position 241 (N241) interacts with Mg(2+). The segment at 244–264 (AELAEAEACVQRRLRAAALDG) is linker. An N-acetyltransferase region spans residues 265–461 (GATLVAPETV…AALRRKKEQG (197 aa)). UDP-N-acetyl-alpha-D-glucosamine contacts are provided by R330 and K348. The active-site Proton acceptor is H360. Residues Y363 and N374 each coordinate UDP-N-acetyl-alpha-D-glucosamine. Residues A377, 383 to 384 (NY), S402, A420, and R437 contribute to the acetyl-CoA site.

This sequence in the N-terminal section; belongs to the N-acetylglucosamine-1-phosphate uridyltransferase family. In the C-terminal section; belongs to the transferase hexapeptide repeat family. In terms of assembly, homotrimer. Requires Mg(2+) as cofactor.

The protein resides in the cytoplasm. It carries out the reaction alpha-D-glucosamine 1-phosphate + acetyl-CoA = N-acetyl-alpha-D-glucosamine 1-phosphate + CoA + H(+). It catalyses the reaction N-acetyl-alpha-D-glucosamine 1-phosphate + UTP + H(+) = UDP-N-acetyl-alpha-D-glucosamine + diphosphate. It participates in nucleotide-sugar biosynthesis; UDP-N-acetyl-alpha-D-glucosamine biosynthesis; N-acetyl-alpha-D-glucosamine 1-phosphate from alpha-D-glucosamine 6-phosphate (route II): step 2/2. It functions in the pathway nucleotide-sugar biosynthesis; UDP-N-acetyl-alpha-D-glucosamine biosynthesis; UDP-N-acetyl-alpha-D-glucosamine from N-acetyl-alpha-D-glucosamine 1-phosphate: step 1/1. The protein operates within bacterial outer membrane biogenesis; LPS lipid A biosynthesis. Its function is as follows. Catalyzes the last two sequential reactions in the de novo biosynthetic pathway for UDP-N-acetylglucosamine (UDP-GlcNAc). The C-terminal domain catalyzes the transfer of acetyl group from acetyl coenzyme A to glucosamine-1-phosphate (GlcN-1-P) to produce N-acetylglucosamine-1-phosphate (GlcNAc-1-P), which is converted into UDP-GlcNAc by the transfer of uridine 5-monophosphate (from uridine 5-triphosphate), a reaction catalyzed by the N-terminal domain. The sequence is that of Bifunctional protein GlmU from Gluconacetobacter diazotrophicus (strain ATCC 49037 / DSM 5601 / CCUG 37298 / CIP 103539 / LMG 7603 / PAl5).